Consider the following 216-residue polypeptide: Alanyl-tRNA editing protein AlaX-M (216 aa).

Zn(2+)-binding residues include His99, His103, and Cys182.

It belongs to the class-II aminoacyl-tRNA synthetase family. Editing domain AlaX-M subfamily. Monomer. Zn(2+) serves as cofactor.

The protein localises to the cytoplasm. In terms of biological role, functions in trans to edit the amino acid moiety from mischarged charged Gly-tRNA(Ala) and Ser-tRNA(Ala). The chain is Alanyl-tRNA editing protein AlaX-M (alaXM) from Pyrococcus horikoshii (strain ATCC 700860 / DSM 12428 / JCM 9974 / NBRC 100139 / OT-3).